The following is a 178-amino-acid chain: ATP-dependent protease subunit HslV (178 aa).

Thr7 is an active-site residue. Residues Gly162, Cys165, and Thr168 each coordinate Na(+).

It belongs to the peptidase T1B family. HslV subfamily. As to quaternary structure, a double ring-shaped homohexamer of HslV is capped on each side by a ring-shaped HslU homohexamer. The assembly of the HslU/HslV complex is dependent on binding of ATP.

Its subcellular location is the cytoplasm. The catalysed reaction is ATP-dependent cleavage of peptide bonds with broad specificity.. With respect to regulation, allosterically activated by HslU binding. In terms of biological role, protease subunit of a proteasome-like degradation complex believed to be a general protein degrading machinery. In Burkholderia cenocepacia (strain ATCC BAA-245 / DSM 16553 / LMG 16656 / NCTC 13227 / J2315 / CF5610) (Burkholderia cepacia (strain J2315)), this protein is ATP-dependent protease subunit HslV.